A 450-amino-acid chain; its full sequence is Akuammiline synthase 2 (450 aa).

Residue His-154 is the Proton acceptor of the active site. The Nuclear localization signal signature appears at 218–225 (MRRFVFDA). Asp-376 functions as the Proton acceptor in the catalytic mechanism.

Belongs to the plant acyltransferase family. As to quaternary structure, monomer.

Its subcellular location is the cytoplasm. The protein localises to the nucleus. The catalysed reaction is rhazimol + acetyl-CoA = akuammiline + CoA + H(+). The protein operates within alkaloid biosynthesis. Functionally, acyltransferase involved in the biosynthesis of akuammilan monoterpene indole alkaloids (MIAs) natural products, components with various biological properties such as antidiabetic, antibacterial, anti-inflammatory, anticancer, and antimalarial activities. Catalyzes the conversion of rhazimol to akuammiline. The polypeptide is Akuammiline synthase 2 (Alstonia scholaris (Dogbane)).